Reading from the N-terminus, the 118-residue chain is Large ribosomal subunit protein bL21c (118 aa).

It belongs to the bacterial ribosomal protein bL21 family. In terms of assembly, part of the 50S ribosomal subunit.

It localises to the plastid. The protein resides in the chloroplast. This protein binds to 23S rRNA. The protein is Large ribosomal subunit protein bL21c of Anthoceros angustus (Hornwort).